The following is a 1297-amino-acid chain: Phosphoribosylformylglycinamidine synthase (1297 aa).

The tract at residues 303-329 (ISPFPGAATGSGGEIRDEGATGRGAKP) is disordered. Residue 308–319 (GAATGSGGEIRD) coordinates ATP. Residues D680, E719, N723, and D887 each coordinate Mg(2+). Position 889 (S889) interacts with ATP. Residues 1045 to 1297 (IAILREQGVN…RLFRNARMVF (253 aa)) form the Glutamine amidotransferase type-1 domain. C1138 functions as the Nucleophile in the catalytic mechanism. Catalysis depends on residues H1263 and E1265.

This sequence in the N-terminal section; belongs to the FGAMS family. Monomer.

It localises to the cytoplasm. The enzyme catalyses N(2)-formyl-N(1)-(5-phospho-beta-D-ribosyl)glycinamide + L-glutamine + ATP + H2O = 2-formamido-N(1)-(5-O-phospho-beta-D-ribosyl)acetamidine + L-glutamate + ADP + phosphate + H(+). It functions in the pathway purine metabolism; IMP biosynthesis via de novo pathway; 5-amino-1-(5-phospho-D-ribosyl)imidazole from N(2)-formyl-N(1)-(5-phospho-D-ribosyl)glycinamide: step 1/2. Its function is as follows. Phosphoribosylformylglycinamidine synthase involved in the purines biosynthetic pathway. Catalyzes the ATP-dependent conversion of formylglycinamide ribonucleotide (FGAR) and glutamine to yield formylglycinamidine ribonucleotide (FGAM) and glutamate. The polypeptide is Phosphoribosylformylglycinamidine synthase (Haemophilus influenzae (strain 86-028NP)).